The chain runs to 204 residues: MTVTLMQHTSLTICAHAIRTCWQSFEKSDGGGEKDRELIDRVGNKNKHASTLEHLVYTFYIQGISRACLQELARHRIASLSVKSSRYTLKELKAEEEFKEGDWERAKRYLVETESEAVNLASLKALENLRQVLLLGISNDMAKYCLPESYKTELTWTINARALQNFLTLRSSKSALWEIRKLAKTLHEALPKEHRYLFCLNQEG.

Positions Met1–Gly204 constitute a ThyX domain. FAD is bound by residues Ser50 and Arg74–Arg76. DUMP is bound by residues Glu71–Arg74, Ser84–Arg86, and Lys143. Residues Arg74–Ser84 carry the ThyX motif motif. FAD is bound by residues Asn159–Arg161 and Asn165. Arg170 contacts dUMP. The active-site Involved in ionization of N3 of dUMP, leading to its activation is Arg170.

The protein belongs to the thymidylate synthase ThyX family. In terms of assembly, homotetramer. FAD is required as a cofactor.

It carries out the reaction dUMP + (6R)-5,10-methylene-5,6,7,8-tetrahydrofolate + NADPH + H(+) = dTMP + (6S)-5,6,7,8-tetrahydrofolate + NADP(+). It participates in pyrimidine metabolism; dTTP biosynthesis. Catalyzes the reductive methylation of 2'-deoxyuridine-5'-monophosphate (dUMP) to 2'-deoxythymidine-5'-monophosphate (dTMP) while utilizing 5,10-methylenetetrahydrofolate (mTHF) as the methyl donor, and NADPH and FADH(2) as the reductant. The sequence is that of Flavin-dependent thymidylate synthase from Wolinella succinogenes (strain ATCC 29543 / DSM 1740 / CCUG 13145 / JCM 31913 / LMG 7466 / NCTC 11488 / FDC 602W) (Vibrio succinogenes).